The primary structure comprises 217 residues: UPF0502 protein VIBHAR_05349 (217 aa).

This sequence belongs to the UPF0502 family.

In Vibrio campbellii (strain ATCC BAA-1116), this protein is UPF0502 protein VIBHAR_05349.